The chain runs to 433 residues: Tol-Pal system protein TolB (433 aa).

Positions 1 to 21 (MRNLLRGMLVVICCMAGIAAA) are cleaved as a signal peptide.

It belongs to the TolB family. The Tol-Pal system is composed of five core proteins: the inner membrane proteins TolA, TolQ and TolR, the periplasmic protein TolB and the outer membrane protein Pal. They form a network linking the inner and outer membranes and the peptidoglycan layer.

The protein localises to the periplasm. Its function is as follows. Part of the Tol-Pal system, which plays a role in outer membrane invagination during cell division and is important for maintaining outer membrane integrity. The polypeptide is Tol-Pal system protein TolB (Pseudomonas fluorescens (strain SBW25)).